An 80-amino-acid polypeptide reads, in one-letter code: Omega-conotoxin-like 2/7 (80 aa).

The signal sequence occupies residues 1–22 (MKLTCMMIVAVMFLTASIFITA). Positions 23-51 (DNSRNGIENLPRMRRHEMKKPKASKLNKR) are excised as a propeptide. 3 cysteine pairs are disulfide-bonded: cysteine 53/cysteine 71, cysteine 60/cysteine 75, and cysteine 70/cysteine 79.

Belongs to the conotoxin O1 superfamily. As to expression, expressed by the venom duct.

Its subcellular location is the secreted. In terms of biological role, omega-conotoxins act at presynaptic membranes, they bind and block voltage-gated calcium channels (Cav). This is Omega-conotoxin-like 2/7 from Conus imperialis (Imperial cone).